Consider the following 448-residue polypeptide: Histidine--tRNA ligase (448 aa).

Disordered stretches follow at residues 1–20 and 428–448; these read MAIKRPKGTQDHLPDGSPKL and AGQADQHSPAIPHDPTPQEKA.

This sequence belongs to the class-II aminoacyl-tRNA synthetase family. As to quaternary structure, homodimer.

The protein resides in the cytoplasm. It catalyses the reaction tRNA(His) + L-histidine + ATP = L-histidyl-tRNA(His) + AMP + diphosphate + H(+). This Deinococcus deserti (strain DSM 17065 / CIP 109153 / LMG 22923 / VCD115) protein is Histidine--tRNA ligase.